Reading from the N-terminus, the 219-residue chain is Trafficking protein particle complex subunit 4 (219 aa).

This sequence belongs to the TRAPP small subunits family. TRAPPC4 subfamily. Component of the multisubunit TRAPP (transport protein particle) complex, which includes at least TRAPPC2, TRAPPC2L, TRAPPC3, TRAPPC3L, TRAPPC4, TRAPPC5, TRAPPC8, TRAPPC9, TRAPPC10, TRAPPC11 and TRAPPC12. Interacts with SDC2. As to expression, widely expressed.

It is found in the postsynaptic cell membrane. Its subcellular location is the golgi apparatus membrane. The protein resides in the endoplasmic reticulum. It localises to the vesicle. Its function is as follows. Core component of the TRAPP complexes which has a function of guanine nucleotide exchange factor activity for Rab1 GTPase. Plays a role in vesicular transport from endoplasmic reticulum to Golgi and autophagy. May play a role in dendrite postsynaptic membrane trafficking. This Mus musculus (Mouse) protein is Trafficking protein particle complex subunit 4.